The chain runs to 80 residues: Exodeoxyribonuclease 7 small subunit (80 aa).

This sequence belongs to the XseB family. In terms of assembly, heterooligomer composed of large and small subunits.

Its subcellular location is the cytoplasm. It catalyses the reaction Exonucleolytic cleavage in either 5'- to 3'- or 3'- to 5'-direction to yield nucleoside 5'-phosphates.. Functionally, bidirectionally degrades single-stranded DNA into large acid-insoluble oligonucleotides, which are then degraded further into small acid-soluble oligonucleotides. The sequence is that of Exodeoxyribonuclease 7 small subunit from Phenylobacterium zucineum (strain HLK1).